Reading from the N-terminus, the 191-residue chain is Protein YceI (191 aa).

The signal sequence occupies residues M1–A22.

The protein belongs to the UPF0312 family. Type 1 subfamily.

It localises to the periplasm. This Shigella flexneri protein is Protein YceI.